A 264-amino-acid chain; its full sequence is Acid phosphatase (264 aa).

A signal peptide spans 1–28; it reads MIKVPRFICMIALTSGILASGLSQSVSA.

This sequence belongs to the class A bacterial acid phosphatase family. Mg(2+) is required as a cofactor. Requires Zn(2+) as cofactor.

Its subcellular location is the periplasm. It catalyses the reaction a phosphate monoester + H2O = an alcohol + phosphate. The polypeptide is Acid phosphatase (phoC) (Zymomonas mobilis subsp. mobilis (strain ATCC 31821 / ZM4 / CP4)).